The following is a 1032-amino-acid chain: Protein phosphatase 1 regulatory subunit 12A (1032 aa).

Residues 35 to 38 carry the KVKF motif motif; it reads KVKF. ANK repeat units follow at residues 39 to 68, 72 to 101, 105 to 134, 138 to 164, 198 to 227, and 231 to 260; these read DDGAVFLAACSSGDTDEVLKLLHRGADINY, DGLTALHQACIDDNVDMVKFLVENGANINQ, EGWIPLHAAASCGYLDIAEFLIGQGAHVGA, EGDTPLDIAEEEAMEELLQNEVNRQGV, SGGTALHVAAAKGYTEVLKLLIQAGYDVNI, and DGWTPLHAAAHWGKEEACRILVDNLCDMET. (3S)-3-hydroxyasparagine; by HIF1AN occurs at positions 67 and 100. Asn-226 is subject to (3S)-3-hydroxyasparagine; by HIF1AN. Disordered regions lie at residues 290–553 and 588–928; these read LHSE…HRSC and SSTS…RLEK. A compositionally biased stretch (basic and acidic residues) spans 291–300; it reads HSEKRDKKSP. A Phosphoserine modification is found at Ser-299. The segment covering 302-316 has biased composition (polar residues); it reads IESTANMENNQPQKT. Positions 318 to 340 are enriched in basic and acidic residues; sequence KNKETLIIEPEKNASRIESLEQE. Residues 357–369 are compositionally biased toward acidic residues; sequence SEEDEEDDSESEA. The span at 383–399 shows a compositional bias: low complexity; sequence AHTASTQAAPAAVTTPT. The segment covering 400 to 421 has biased composition (polar residues); it reads LSSNQGTPTSPVKKFPTSTTKI. Residues Ser-422 and Ser-432 each carry the phosphoserine modification. Residues 422–432 show a composition bias toward basic and acidic residues; that stretch reads SPKEEERKDES. A Phosphothreonine modification is found at Thr-443. A Phosphoserine modification is found at Ser-445. Tyr-446 is subject to Phosphotyrosine. Residues 469 to 480 are compositionally biased toward low complexity; sequence RSASSPRLSSSL. Phosphoserine; by NUAK1 is present on Ser-472. Ser-473 bears the Phosphoserine; by CDK1 mark. Ser-477 is modified (phosphoserine). Residues 481–491 show a composition bias toward basic and acidic residues; sequence DNKEKEKDNKG. Ser-507 and Ser-509 each carry phosphoserine. A compositionally biased stretch (polar residues) spans 540-551; that stretch reads NSSINEGSTYHR. At Ser-601 the chain carries Phosphoserine. The segment covering 602–612 has biased composition (polar residues); sequence PAGTQSSTSNR. A compositionally biased stretch (basic and acidic residues) spans 614 to 625; the sequence is WAEDSTEKEKDS. Ser-618 bears the Phosphoserine mark. Residues 633–661 show a composition bias toward low complexity; the sequence is LVAPTVVSAAASSTTALTTTTAGTLSSTS. The span at 674 to 683 shows a compositional bias: basic and acidic residues; that stretch reads VRDEESESQR. Residues 683 to 866 form an interaction with ROCK2 region; the sequence is RKARSRQARQ…VSFWTQDSDE (184 aa). Basic residues predominate over residues 684-694; it reads KARSRQARQSR. Phosphoserine; by PKA and PKG; in vitro is present on residues Ser-693 and Ser-696. Thr-697 bears the Phosphothreonine; by ROCK1, ROCK2, CDC42BP, ZIPK/DAPK3 and RAF1 mark. Residues 719–768 are compositionally biased toward basic and acidic residues; that stretch reads RTREQENEEKDKEEKEKQDKEKQEEKKESEVSREDEYKQKYSRTYDETYA. Positions 774 to 797 are enriched in low complexity; sequence STSSSSTPSSSSLSTLGSSLYASS. The segment covering 798–812 has biased composition (polar residues); it reads QLNRPNSLVGITSAY. Ser-804 bears the Phosphoserine mark. Basic and acidic residues predominate over residues 816-842; sequence LTKDNEREGEKKEEEKEGEDKSQPKSI. The segment covering 843–854 has biased composition (basic residues); sequence RERRRPREKRRS. Ser-854 is modified (phosphoserine; by ROCK2). A phosphoserine mark is found at Ser-864 and Ser-873. The span at 869-885 shows a compositional bias: basic and acidic residues; the sequence is QERQSDTEDGSSKRDTQ. Residues 886-900 show a composition bias toward low complexity; that stretch reads TDSVSRYDSSSTSSS. A phosphoserine mark is found at Ser-905 and Ser-910. A Phosphoserine; by NUAK1 modification is found at Ser-912. Basic and acidic residues predominate over residues 916-928; it reads LEERKPYGSRLEK. Ser-997 bears the Phosphoserine mark.

PP1 comprises a catalytic subunit, PPP1CA, PPP1CB or PPP1CC, and one or several targeting or regulatory subunits. PPP1R12A mediates binding to myosin. Interacts with ARHA and CIT. Binds PPP1R12B, ROCK1 and IL16. Interacts directly with PRKG1. Non-covalent dimer of 2 dimers; PRKG1-PRKG1 and PPP1R12A-PPP1R12A. Interacts with SMTNL1. Interacts with PPP1CB; the interaction is direct. Interacts (when phosphorylated at Ser-445, Ser-472 and Ser-910) with 14-3-3. Interacts with ROCK1 and ROCK2. Interacts with isoform 1 and isoform 2 of ZIPK/DAPK3. Interacts with RAF1. Interacts with HIF1AN. Interacts with NCKAP1L. Phosphorylated on upon DNA damage, probably by ATM or ATR. Phosphorylated by CIT (Rho-associated kinase). Phosphorylated cooperatively by ROCK1 and CDC42BP on Thr-697. In vitro, phosphorylation of Ser-696 by PKA and PKG appears to prevent phosphorylation of the inhibitory site Thr-697, probably mediated by PRKG1. May be phosphorylated at Thr-697 by DMPK; may inhibit the myosin phosphatase activity. Phosphorylated at Ser-473 by CDK1 during mitosis, creating docking sites for the POLO box domains of PLK1. Subsequently, PLK1 binds and phosphorylates PPP1R12A. Smooth muscle. Detected in aorta, portal vein, stomach, intestine, bladder and lung.

It is found in the cytoplasm. The protein resides in the cytoskeleton. The protein localises to the stress fiber. Functionally, key regulator of protein phosphatase 1C (PPP1C). Mediates binding to myosin. As part of the PPP1C complex, involved in dephosphorylation of PLK1. Capable of inhibiting HIF1AN-dependent suppression of HIF1A activity. The chain is Protein phosphatase 1 regulatory subunit 12A from Rattus norvegicus (Rat).